The chain runs to 429 residues: Enolase (429 aa).

Q162 is a binding site for (2R)-2-phosphoglycerate. Residue E204 is the Proton donor of the active site. The Mg(2+) site is built by D241, E283, and D310. (2R)-2-phosphoglycerate contacts are provided by K335, R364, S365, and K386. Residue K335 is the Proton acceptor of the active site.

The protein belongs to the enolase family. Requires Mg(2+) as cofactor.

It is found in the cytoplasm. The protein localises to the secreted. It localises to the cell surface. It carries out the reaction (2R)-2-phosphoglycerate = phosphoenolpyruvate + H2O. It functions in the pathway carbohydrate degradation; glycolysis; pyruvate from D-glyceraldehyde 3-phosphate: step 4/5. Catalyzes the reversible conversion of 2-phosphoglycerate (2-PG) into phosphoenolpyruvate (PEP). It is essential for the degradation of carbohydrates via glycolysis. In Mycobacterium avium (strain 104), this protein is Enolase.